A 486-amino-acid polypeptide reads, in one-letter code: Aspartyl/glutamyl-tRNA(Asn/Gln) amidotransferase subunit B (486 aa).

The protein belongs to the GatB/GatE family. GatB subfamily. Heterotrimer of A, B and C subunits.

It carries out the reaction L-glutamyl-tRNA(Gln) + L-glutamine + ATP + H2O = L-glutaminyl-tRNA(Gln) + L-glutamate + ADP + phosphate + H(+). The catalysed reaction is L-aspartyl-tRNA(Asn) + L-glutamine + ATP + H2O = L-asparaginyl-tRNA(Asn) + L-glutamate + ADP + phosphate + 2 H(+). Allows the formation of correctly charged Asn-tRNA(Asn) or Gln-tRNA(Gln) through the transamidation of misacylated Asp-tRNA(Asn) or Glu-tRNA(Gln) in organisms which lack either or both of asparaginyl-tRNA or glutaminyl-tRNA synthetases. The reaction takes place in the presence of glutamine and ATP through an activated phospho-Asp-tRNA(Asn) or phospho-Glu-tRNA(Gln). The chain is Aspartyl/glutamyl-tRNA(Asn/Gln) amidotransferase subunit B from Orientia tsutsugamushi (strain Boryong) (Rickettsia tsutsugamushi).